Reading from the N-terminus, the 340-residue chain is Fructose-bisphosphate aldolase (340 aa).

S53 contacts D-glyceraldehyde 3-phosphate. The active-site Proton donor is D95. 4 residues coordinate Zn(2+): H96, D131, E161, and H212. Dihydroxyacetone phosphate is bound at residue G213. H249 provides a ligand contact to Zn(2+). Dihydroxyacetone phosphate is bound by residues 250-252 and 271-274; these read GGS and NLDT.

It belongs to the class II fructose-bisphosphate aldolase family. The cofactor is Zn(2+).

The catalysed reaction is beta-D-fructose 1,6-bisphosphate = D-glyceraldehyde 3-phosphate + dihydroxyacetone phosphate. Its pathway is carbohydrate degradation; glycolysis; D-glyceraldehyde 3-phosphate and glycerone phosphate from D-glucose: step 4/4. Its function is as follows. Catalyzes the aldol condensation of dihydroxyacetone phosphate (DHAP or glycerone-phosphate) with glyceraldehyde 3-phosphate (G3P) to form fructose 1,6-bisphosphate (FBP) in gluconeogenesis and the reverse reaction in glycolysis. The chain is Fructose-bisphosphate aldolase (fba) from Streptomyces galbus.